A 281-amino-acid polypeptide reads, in one-letter code: Imidazoleglycerol-phosphate dehydratase, chloroplastic (281 aa).

The N-terminal 85 residues, 1-85, are a transit peptide targeting the chloroplast; sequence MELYAASHSL…TSLPFHPETR (85 aa). Substrate-binding positions include glutamate 95, 121–129, 147–151, arginine 173, and arginine 195; these read HMLDQLASH and HHTNE. Positions 121, 147, 148, and 151 each coordinate Mn(2+). Residues histidine 219, histidine 243, histidine 244, and glutamate 247 each contribute to the Mn(2+) site. Substrate is bound by residues 243–251 and 273–275; these read HHIIEATFK and SSK.

Belongs to the imidazoleglycerol-phosphate dehydratase family. Mn(2+) serves as cofactor.

The protein localises to the plastid. It localises to the chloroplast. The enzyme catalyses D-erythro-1-(imidazol-4-yl)glycerol 3-phosphate = 3-(imidazol-4-yl)-2-oxopropyl phosphate + H2O. It participates in amino-acid biosynthesis; L-histidine biosynthesis; L-histidine from 5-phospho-alpha-D-ribose 1-diphosphate: step 6/9. The sequence is that of Imidazoleglycerol-phosphate dehydratase, chloroplastic from Pisum sativum (Garden pea).